The sequence spans 80 residues: Dermaseptin-DA3 (80 aa).

The first 22 residues, 1 to 22 (MAFLKKSLFLVLFLGLVSLSIC), serve as a signal peptide directing secretion. Residues 23–42 (EEKRENEDEEEQEDDEQSEE) constitute a propeptide that is removed on maturation. The segment at 24–48 (EKRENEDEEEQEDDEQSEEKRGMWS) is disordered. Positions 29–40 (EDEEEQEDDEQS) are enriched in acidic residues. L77 carries the post-translational modification Leucine amide. Positions 79–80 (EQ) are excised as a propeptide.

It belongs to the frog skin active peptide (FSAP) family. Dermaseptin subfamily. In terms of tissue distribution, expressed by the skin glands.

It localises to the secreted. Functionally, possesses a potent antimicrobial activity against Gram-positive and Gram-negative bacteria. Probably acts by disturbing membrane functions with its amphipathic structure. This Agalychnis dacnicolor (Giant Mexican leaf frog) protein is Dermaseptin-DA3.